Consider the following 237-residue polypeptide: UPF0053 protein HI_0056 (237 aa).

A run of 7 helical transmembrane segments spans residues 12–32, 49–69, 90–110, 126–146, 151–171, 188–208, and 210–230; these read ISLVTLAALEIVLGIDNIIFI, ILGLALAMLTRILLLMSLAWI, ILLIGGLFLIIKSSGEIKEAI, YLGVLIQIAVLDIVFSLDSVI, MASHLPVMILAIMIAVGVMMF, ILALAFLVLVGISLIAESLDI, and IPKGYIYFAMGFSVVVEMINI.

The protein belongs to the UPF0053 family.

The protein localises to the cell membrane. The chain is UPF0053 protein HI_0056 from Haemophilus influenzae (strain ATCC 51907 / DSM 11121 / KW20 / Rd).